We begin with the raw amino-acid sequence, 435 residues long: Fez family zinc finger protein 2 (435 aa).

Residues 27 to 42 (SLAFSIERIMAKTSEP) carry the Engrailed homology 1 repressor motif. 6 consecutive C2H2-type zinc fingers follow at residues 254–276 (FTCE…MPVH), 282–304 (FVCK…KIIH), 310–332 (HKCN…IRIH), 338–360 (FVCE…KLTH), 366–388 (YKCT…MHTH), and 394–417 (FTCG…RKLH).

It belongs to the krueppel C2H2-type zinc-finger protein family.

It is found in the nucleus. Transcription repressor. Component of the regulatory cascade that controls the development of dopaminergic (DA) and serotonergic (5HT) neurons. The sequence is that of Fez family zinc finger protein 2 (fezf2) from Xenopus tropicalis (Western clawed frog).